Here is a 287-residue protein sequence, read N- to C-terminus: Phosphoribosylaminoimidazole-succinocarboxamide synthase (287 aa).

The protein belongs to the SAICAR synthetase family.

It catalyses the reaction 5-amino-1-(5-phospho-D-ribosyl)imidazole-4-carboxylate + L-aspartate + ATP = (2S)-2-[5-amino-1-(5-phospho-beta-D-ribosyl)imidazole-4-carboxamido]succinate + ADP + phosphate + 2 H(+). It participates in purine metabolism; IMP biosynthesis via de novo pathway; 5-amino-1-(5-phospho-D-ribosyl)imidazole-4-carboxamide from 5-amino-1-(5-phospho-D-ribosyl)imidazole-4-carboxylate: step 1/2. This Neisseria meningitidis serogroup B (strain ATCC BAA-335 / MC58) protein is Phosphoribosylaminoimidazole-succinocarboxamide synthase.